The sequence spans 954 residues: Valine--tRNA ligase (954 aa).

Positions 48–58 (PNVTGSLHMGH) match the 'HIGH' region motif. The 'KMSKS' region signature appears at 560–564 (KMSKS). Lys-563 provides a ligand contact to ATP. A coiled-coil region spans residues 883-954 (AGFINKEAEL…QTQYQAIENL (72 aa)).

Belongs to the class-I aminoacyl-tRNA synthetase family. ValS type 1 subfamily. Monomer.

It localises to the cytoplasm. The enzyme catalyses tRNA(Val) + L-valine + ATP = L-valyl-tRNA(Val) + AMP + diphosphate. Its function is as follows. Catalyzes the attachment of valine to tRNA(Val). As ValRS can inadvertently accommodate and process structurally similar amino acids such as threonine, to avoid such errors, it has a 'posttransfer' editing activity that hydrolyzes mischarged Thr-tRNA(Val) in a tRNA-dependent manner. The polypeptide is Valine--tRNA ligase (Actinobacillus pleuropneumoniae serotype 3 (strain JL03)).